Consider the following 79-residue polypeptide: Raniseptin-9 (79 aa).

The signal sequence occupies residues 1–22 (MAFLKKSLFLVLFLGIVSLSIC). A propeptide spanning residues 23–49 (EEEKREGEEEEKQEEENEELSEEELRE) is cleaved from the precursor. The tract at residues 27 to 46 (REGEEEEKQEEENEELSEEE) is disordered. Acidic residues predominate over residues 30-44 (EEEEKQEEENEELSE).

The protein belongs to the frog skin active peptide (FSAP) family. Dermaseptin subfamily. In terms of tissue distribution, expressed by the skin glands.

It localises to the secreted. Has antibacterial activity. This chain is Raniseptin-9, found in Boana raniceps (Chaco tree frog).